The following is an 84-amino-acid chain: Cytochrome b559 subunit alpha (84 aa).

Residues 22 to 36 (IIHSITIPSLFVSGW) traverse the membrane as a helical segment. Residue His24 participates in heme binding.

Belongs to the PsbE/PsbF family. Heterodimer of an alpha subunit and a beta subunit. PSII is composed of 1 copy each of membrane proteins PsbA, PsbB, PsbC, PsbD, PsbE, PsbF, PsbH, PsbI, PsbJ, PsbK, PsbL, PsbM, PsbT, PsbX, PsbY, PsbZ, Psb30/Ycf12, at least 3 peripheral proteins of the oxygen-evolving complex and a large number of cofactors. It forms dimeric complexes. It depends on heme b as a cofactor.

Its subcellular location is the plastid. It localises to the chloroplast thylakoid membrane. In terms of biological role, this b-type cytochrome is tightly associated with the reaction center of photosystem II (PSII). PSII is a light-driven water:plastoquinone oxidoreductase that uses light energy to abstract electrons from H(2)O, generating O(2) and a proton gradient subsequently used for ATP formation. It consists of a core antenna complex that captures photons, and an electron transfer chain that converts photonic excitation into a charge separation. This is Cytochrome b559 subunit alpha from Phaeodactylum tricornutum (strain CCAP 1055/1).